A 203-amino-acid chain; its full sequence is Holliday junction branch migration complex subunit RuvA (203 aa).

Residues 1 to 64 form a domain I region; sequence MIGRLRGIII…EDAQLLYGFN (64 aa). The interval 65-142 is domain II; it reads NKQERTLFKE…KGLHGDLFTP (78 aa). The segment at 143-154 is flexible linker; the sequence is AADLVLTSPASP. The segment at 155–203 is domain III; that stretch reads ATDDAEQEAVAALVALGYKPQEASRMVSKIARPDASSETLIREALRAAL.

Belongs to the RuvA family. Homotetramer. Forms an RuvA(8)-RuvB(12)-Holliday junction (HJ) complex. HJ DNA is sandwiched between 2 RuvA tetramers; dsDNA enters through RuvA and exits via RuvB. An RuvB hexamer assembles on each DNA strand where it exits the tetramer. Each RuvB hexamer is contacted by two RuvA subunits (via domain III) on 2 adjacent RuvB subunits; this complex drives branch migration. In the full resolvosome a probable DNA-RuvA(4)-RuvB(12)-RuvC(2) complex forms which resolves the HJ.

It localises to the cytoplasm. The RuvA-RuvB-RuvC complex processes Holliday junction (HJ) DNA during genetic recombination and DNA repair, while the RuvA-RuvB complex plays an important role in the rescue of blocked DNA replication forks via replication fork reversal (RFR). RuvA specifically binds to HJ cruciform DNA, conferring on it an open structure. The RuvB hexamer acts as an ATP-dependent pump, pulling dsDNA into and through the RuvAB complex. HJ branch migration allows RuvC to scan DNA until it finds its consensus sequence, where it cleaves and resolves the cruciform DNA. The protein is Holliday junction branch migration complex subunit RuvA of Shigella boydii serotype 18 (strain CDC 3083-94 / BS512).